The chain runs to 111 residues: Cytochrome c6-like (111 aa).

Residues 1–25 (MQKFLKLVLVTFLFLISTLTPPANA) form the signal peptide. Residues Cys-39, Cys-42, His-43, and Met-83 each coordinate heme c.

Belongs to the cytochrome c family. PetJ subfamily. In terms of processing, binds 1 heme c group covalently per subunit.

Its subcellular location is the cellular thylakoid lumen. In Nostoc sp. (strain PCC 7120 / SAG 25.82 / UTEX 2576), this protein is Cytochrome c6-like.